The sequence spans 255 residues: Large ribosomal subunit protein uL4 (255 aa).

It belongs to the universal ribosomal protein uL4 family. As to quaternary structure, part of the 50S ribosomal subunit.

Its function is as follows. One of the primary rRNA binding proteins, this protein initially binds near the 5'-end of the 23S rRNA. It is important during the early stages of 50S assembly. It makes multiple contacts with different domains of the 23S rRNA in the assembled 50S subunit and ribosome. In terms of biological role, forms part of the polypeptide exit tunnel. The polypeptide is Large ribosomal subunit protein uL4 (Thermoplasma acidophilum (strain ATCC 25905 / DSM 1728 / JCM 9062 / NBRC 15155 / AMRC-C165)).